The sequence spans 593 residues: Aspartate--tRNA(Asp/Asn) ligase (593 aa).

An L-aspartate-binding site is contributed by Glu173. Residues 197–200 (QLFK) are aspartate. Arg219 contributes to the L-aspartate binding site. Residues 219–221 (RDE) and Gln228 contribute to the ATP site. His451 lines the L-aspartate pocket. Glu485 contributes to the ATP binding site. Arg492 provides a ligand contact to L-aspartate. ATP is bound at residue 537–540 (GIDR).

The protein belongs to the class-II aminoacyl-tRNA synthetase family. Type 1 subfamily. Homodimer.

It localises to the cytoplasm. The enzyme catalyses tRNA(Asx) + L-aspartate + ATP = L-aspartyl-tRNA(Asx) + AMP + diphosphate. Its function is as follows. Aspartyl-tRNA synthetase with relaxed tRNA specificity since it is able to aspartylate not only its cognate tRNA(Asp) but also tRNA(Asn). Reaction proceeds in two steps: L-aspartate is first activated by ATP to form Asp-AMP and then transferred to the acceptor end of tRNA(Asp/Asn). This chain is Aspartate--tRNA(Asp/Asn) ligase, found in Legionella pneumophila (strain Corby).